The chain runs to 356 residues: Tyrosine recombinase XerS (356 aa).

One can recognise a Core-binding (CB) domain in the interval L16 to T121. Positions K169–D354 constitute a Tyr recombinase domain. Residues R210, K234, H306, R309, and H332 contribute to the active site. Y341 serves as the catalytic O-(3'-phospho-DNA)-tyrosine intermediate.

This sequence belongs to the 'phage' integrase family. XerS subfamily.

The protein localises to the cytoplasm. FtsK is required for recombination. Its function is as follows. Site-specific tyrosine recombinase, which acts by catalyzing the cutting and rejoining of the recombining DNA molecules. Essential to convert dimers of the bacterial chromosome into monomers to permit their segregation at cell division. In Streptococcus thermophilus (strain CNRZ 1066), this protein is Tyrosine recombinase XerS.